We begin with the raw amino-acid sequence, 306 residues long: Protein-methionine-sulfoxide reductase catalytic subunit MsrP (306 aa).

The segment at residues 1-44 is a signal peptide (tat-type signal); it reads MLIRHAPDLTDNDVTGHGLYLRRRDFIGGAAGLGLMAAAGSASA. Residues Asn69, 72 to 73, Cys127, Thr162, Asn210, Arg215, and 226 to 228 each bind Mo-molybdopterin; these read YE and GIK.

This sequence belongs to the MsrP family. As to quaternary structure, heterodimer of a catalytic subunit (MsrP) and a heme-binding subunit (MsrQ). It depends on Mo-molybdopterin as a cofactor. In terms of processing, predicted to be exported by the Tat system. The position of the signal peptide cleavage has not been experimentally proven.

It is found in the periplasm. It catalyses the reaction L-methionyl-[protein] + a quinone + H2O = L-methionyl-(S)-S-oxide-[protein] + a quinol. The enzyme catalyses L-methionyl-[protein] + a quinone + H2O = L-methionyl-(R)-S-oxide-[protein] + a quinol. Its function is as follows. Part of the MsrPQ system that repairs oxidized periplasmic proteins containing methionine sulfoxide residues (Met-O), using respiratory chain electrons. Thus protects these proteins from oxidative-stress damage caused by reactive species of oxygen and chlorine generated by the host defense mechanisms. MsrPQ is essential for the maintenance of envelope integrity under bleach stress, rescuing a wide series of structurally unrelated periplasmic proteins from methionine oxidation. The catalytic subunit MsrP is non-stereospecific, being able to reduce both (R-) and (S-) diastereoisomers of methionine sulfoxide. The polypeptide is Protein-methionine-sulfoxide reductase catalytic subunit MsrP (Caulobacter sp. (strain K31)).